The chain runs to 425 residues: Protein disulfide isomerase-like 5-3 (425 aa).

Positions 1–28 (MGKPTLPPVVVVVVLLLLVVVLPATTCG) are cleaved as a signal peptide. The 125-residue stretch at 29–153 (ADAGGGGEAE…LVENLKKLVA (125 aa)) folds into the Thioredoxin domain. Catalysis depends on nucleophile residues cysteine 75 and cysteine 78. Cysteine 75 and cysteine 78 are oxidised to a cystine. A helical membrane pass occupies residues 386-406 (LLGVNAVYILVFLVAVLVLLM).

This sequence belongs to the protein disulfide isomerase family.

It is found in the membrane. In terms of biological role, acts as a protein-folding catalyst that interacts with nascent polypeptides to catalyze the formation, isomerization, and reduction or oxidation of disulfide bonds. May play a role in storage protein biogenesis. This Oryza sativa subsp. japonica (Rice) protein is Protein disulfide isomerase-like 5-3 (PDIL5-3).